We begin with the raw amino-acid sequence, 101 residues long: Ubiquitin-related modifier 1 homolog (101 aa).

Gly-101 is modified (1-thioglycine). Gly-101 is covalently cross-linked (Glycyl lysine isopeptide (Gly-Lys) (interchain with K-? in acceptor proteins)).

It belongs to the URM1 family. In terms of assembly, interacts with cer. Post-translationally, C-terminal thiocarboxylation occurs in 2 steps, it is first acyl-adenylated (-COAMP) via the hesA/moeB/thiF part of the MOCS3 homolog, then thiocarboxylated (-COSH) via the rhodanese domain of the MOCS3 homolog.

It is found in the cytoplasm. It functions in the pathway tRNA modification; 5-methoxycarbonylmethyl-2-thiouridine-tRNA biosynthesis. Functionally, acts as a sulfur carrier required for 2-thiolation of mcm(5)S(2)U at tRNA wobble positions of cytosolic tRNA(Lys), tRNA(Glu) and tRNA(Gln). Serves as sulfur donor in tRNA 2-thiolation reaction by being thiocarboxylated (-COSH) at its C-terminus by MOCS3. The sulfur is then transferred to tRNA to form 2-thiolation of mcm(5)S(2)U. Also acts as a ubiquitin-like protein (UBL) that is covalently conjugated via an isopeptide bond to lysine residues of target proteins such as Prx2/Jafrac1, Ciao1, Eip71CD and GILT1. The thiocarboxylated form serves as substrate for conjugation and oxidative stress specifically induces the formation of UBL-protein conjugates. The polypeptide is Ubiquitin-related modifier 1 homolog (Drosophila ananassae (Fruit fly)).